Here is an 89-residue protein sequence, read N- to C-terminus: Small ribosomal subunit protein uS15 (89 aa).

It belongs to the universal ribosomal protein uS15 family. In terms of assembly, part of the 30S ribosomal subunit. Forms a bridge to the 50S subunit in the 70S ribosome, contacting the 23S rRNA.

One of the primary rRNA binding proteins, it binds directly to 16S rRNA where it helps nucleate assembly of the platform of the 30S subunit by binding and bridging several RNA helices of the 16S rRNA. In terms of biological role, forms an intersubunit bridge (bridge B4) with the 23S rRNA of the 50S subunit in the ribosome. The sequence is that of Small ribosomal subunit protein uS15 from Streptococcus thermophilus (strain CNRZ 1066).